The following is a 249-amino-acid chain: DNA polymerase sliding clamp (249 aa).

Belongs to the PCNA family. In terms of assembly, homotrimer. The subunits circularize to form a toroid; DNA passes through its center. Replication factor C (RFC) is required to load the toroid on the DNA.

Its function is as follows. Sliding clamp subunit that acts as a moving platform for DNA processing. Responsible for tethering the catalytic subunit of DNA polymerase and other proteins to DNA during high-speed replication. This chain is DNA polymerase sliding clamp, found in Nanoarchaeum equitans (strain Kin4-M).